A 203-amino-acid chain; its full sequence is Dual-action ribosomal maturation protein DarP (203 aa).

2 disordered regions span residues 1–31 (MPPM…SKSQ) and 182–203 (GGAS…DDEA). The segment covering 186 to 203 (DSDDEAADDAGDDHDDEA) has biased composition (acidic residues).

Belongs to the DarP family.

The protein resides in the cytoplasm. Its function is as follows. Member of a network of 50S ribosomal subunit biogenesis factors which assembles along the 30S-50S interface, preventing incorrect 23S rRNA structures from forming. Promotes peptidyl transferase center (PTC) maturation. The polypeptide is Dual-action ribosomal maturation protein DarP (Burkholderia cenocepacia (strain HI2424)).